We begin with the raw amino-acid sequence, 291 residues long: 4-hydroxy-tetrahydrodipicolinate synthase (291 aa).

Threonine 45 lines the pyruvate pocket. The Proton donor/acceptor role is filled by tyrosine 133. Catalysis depends on lysine 161, which acts as the Schiff-base intermediate with substrate. Isoleucine 203 lines the pyruvate pocket.

The protein belongs to the DapA family. In terms of assembly, homotetramer; dimer of dimers.

The protein localises to the cytoplasm. The catalysed reaction is L-aspartate 4-semialdehyde + pyruvate = (2S,4S)-4-hydroxy-2,3,4,5-tetrahydrodipicolinate + H2O + H(+). The protein operates within amino-acid biosynthesis; L-lysine biosynthesis via DAP pathway; (S)-tetrahydrodipicolinate from L-aspartate: step 3/4. Catalyzes the condensation of (S)-aspartate-beta-semialdehyde [(S)-ASA] and pyruvate to 4-hydroxy-tetrahydrodipicolinate (HTPA). In Neisseria meningitidis serogroup C / serotype 2a (strain ATCC 700532 / DSM 15464 / FAM18), this protein is 4-hydroxy-tetrahydrodipicolinate synthase.